We begin with the raw amino-acid sequence, 568 residues long: Zinc finger protein 76 (568 aa).

K24 participates in a covalent cross-link: Glycyl lysine isopeptide (Lys-Gly) (interchain with G-Cter in SUMO2). Tandem repeats lie at residues 34-45, 62-73, and 88-99. The tract at residues 34–99 is 3 X 12 AA approximate repeats; it reads IQLEDGTTAY…LEDGSTAYIH (66 aa). 7 C2H2-type zinc fingers span residues 165–189, 195–219, 225–249, 255–279, 285–309, 315–339, and 345–368; these read FRCG…ERAH, YRCD…VRTH, YKCP…VRTH, FRCP…VRTH, YTCP…VRIH, YVCT…HVVH, and YTCS…RSAH. The tract at residues 365–401 is disordered; that stretch reads RSAHGELEATEESEQALYEQQQLEAASAAEESPSPKP. Positions 379-396 are enriched in low complexity; that stretch reads QALYEQQQLEAASAAEES.

This sequence belongs to the krueppel C2H2-type zinc-finger protein family.

The protein resides in the nucleus. May be involved in transcriptional regulation. The polypeptide is Zinc finger protein 76 (Znf76) (Rattus norvegicus (Rat)).